The primary structure comprises 389 residues: MLLALAQWLQNDYGFLRVFNYLTFRAVMASLTALVIGLGFGPFVIRRLTELKVGQAVRSYGPQTHLVKAGTPTMGGVLVLIGIAVSTLLWADWGNRFIWIVLLVTLGYGAIGWVDDYRKVVHRDPKGMSSREKFFWQTVIGLFAAAYLAFSVSETSNMRVLELFMEWVRSGLSLNLPAKSHLIVPFFKEISYPLGVFGFIILTYLVIVGSSNAVNLTDGLDGLVIMPVVLVGSALGVFAYVMGSAVYSKYLLFPHIPGAGELLIFCSAMAGAGLAFLWFNAHPAQVFMGDVGALALGGALGTIAVIVRQEIVLFIMGGIFVAETVSVMLQVTWFKFTKKRYGEGRRLFRMAPLHHHFELSGWKETQVVVRFWVITMMLVLIGLSTLKLR.

10 consecutive transmembrane segments (helical) span residues 25–45, 74–94, 97–117, 134–154, 190–210, 222–242, 259–279, 286–306, 311–331, and 366–386; these read RAVM…PFVI, MGGV…ADWG, FIWI…VDDY, FFWQ…SVSE, ISYP…IVGS, GLVI…AYVM, AGEL…FLWF, VFMG…IAVI, IVLF…MLQV, and QVVV…LSTL.

Belongs to the glycosyltransferase 4 family. MraY subfamily. Mg(2+) serves as cofactor.

The protein localises to the cell inner membrane. The enzyme catalyses UDP-N-acetyl-alpha-D-muramoyl-L-alanyl-gamma-D-glutamyl-meso-2,6-diaminopimeloyl-D-alanyl-D-alanine + di-trans,octa-cis-undecaprenyl phosphate = di-trans,octa-cis-undecaprenyl diphospho-N-acetyl-alpha-D-muramoyl-L-alanyl-D-glutamyl-meso-2,6-diaminopimeloyl-D-alanyl-D-alanine + UMP. Its pathway is cell wall biogenesis; peptidoglycan biosynthesis. In terms of biological role, catalyzes the initial step of the lipid cycle reactions in the biosynthesis of the cell wall peptidoglycan: transfers peptidoglycan precursor phospho-MurNAc-pentapeptide from UDP-MurNAc-pentapeptide onto the lipid carrier undecaprenyl phosphate, yielding undecaprenyl-pyrophosphoryl-MurNAc-pentapeptide, known as lipid I. In Ralstonia pickettii (strain 12J), this protein is Phospho-N-acetylmuramoyl-pentapeptide-transferase.